We begin with the raw amino-acid sequence, 1514 residues long: Mitogen-activated protein kinase-binding protein 1 (1514 aa).

Residue alanine 2 is modified to N-acetylalanine. WD repeat units lie at residues 88-129 (SSRK…QVAE), 132-173 (EHKY…VVAS), 175-213 (KVSS…TSKV), 276-315 (DSFT…FLST), 342-381 (ARYP…KVGK), 387-436 (YHSS…VHGS), 477-516 (DPRV…EMLK), 519-561 (AHDS…SLQQ), 565-606 (EHSS…DGVQ), 614-653 (VRKT…QKKL), 659-698 (GEDG…CVAT), and 701-740 (GHSE…TISM). 4 disordered regions span residues 748-804 (RQRQ…PALP), 880-925 (PSLQ…SQPC), 951-1256 (EDGI…SSMA), and 1299-1336 (DIPK…GLGK). The segment covering 789–800 (KEGEDEGTEEEL) has biased composition (acidic residues). Composition is skewed to polar residues over residues 905-925 (LETS…SQPC) and 961-971 (DNPTMDTSEFQ). Low complexity predominate over residues 996 to 1011 (DSACSVDYSSSCLSSP). Residues 1032–1048 (DLEEPAEGDEEEEEEEG) show a composition bias toward acidic residues. Low complexity predominate over residues 1113-1126 (PSPSSSSLALMSRP). Composition is skewed to polar residues over residues 1188 to 1200 (SPFS…QSVH) and 1245 to 1256 (HSYQNPTTSSMA). Residue serine 1198 is modified to Phosphoserine.

As to quaternary structure, can form homodimers (via C-terminus). Interacts (via C-terminus) with WDR62 (via C-terminus). Interacts with MAPK9. Interacts (via N-terminus) with NOD2; the interaction is enhanced in presence of muramyl dipeptide (MDP). Interacts with MAPK10. Expressed in intestinal mucosa, where it is detected in epithelial cells, endothelial cells, smooth muscle cells and immune cells, such as lymphocytes. Expressed in kidney.

Its subcellular location is the cytoplasm. It is found in the nucleus. The protein localises to the cytoskeleton. It localises to the spindle pole. In terms of biological role, negative regulator of NOD2 function. It down-regulates NOD2-induced processes such as activation of NF-kappa-B signaling, IL8 secretion and antibacterial response. Involved in JNK signaling pathway. This chain is Mitogen-activated protein kinase-binding protein 1 (MAPKBP1), found in Homo sapiens (Human).